The sequence spans 656 residues: NADH-ubiquinone oxidoreductase chain 5 (656 aa).

17 helical membrane passes run 5-23 (IIILPVLGSIVAGFFGRKL), 30-52 (IITCSCVIVTTILALLAWVEVGF), 81-103 (LTVSMLLPVLIISSLVHIYSISY), 112-129 (RFFSYLSLFTFMMIILVT), 133-155 (YLLMFVGWEGVGVCSYLLVSFWF), 168-190 (FLTNRVGDCFLTIGMFAILWSLG), 200-222 (LAPYINENIITIIGICLVIGAMA), 243-262 (VSALIHAATMVTAGVYLLMR), 272-294 (TVLLICLWLGAITTVFSSLVGLF), 301-320 (VIAYSTMSQLGLMVVAIGLS), 324-346 (IALFHLVNHAFYKAALFLGAGSI), 367-389 (PLTYSIILIASLSLAAFPFLTGF), 409-431 (SVYAISTIGAIFTTLYSVKVIYL), 452-471 (IFLTLPLVILAIFSIFFGYL), 514-536 (FIFTVLFSILAILLSEFIPGSVF), 607-629 (LSTGVVTSYALYILLGLISFIII), and 634-653 (QISSSLIVLLIILTLFSLNF).

The protein belongs to the complex I subunit 5 family.

The protein resides in the mitochondrion inner membrane. The catalysed reaction is a ubiquinone + NADH + 5 H(+)(in) = a ubiquinol + NAD(+) + 4 H(+)(out). In terms of biological role, core subunit of the mitochondrial membrane respiratory chain NADH dehydrogenase (Complex I) that is believed to belong to the minimal assembly required for catalysis. Complex I functions in the transfer of electrons from NADH to the respiratory chain. The immediate electron acceptor for the enzyme is believed to be ubiquinone. The sequence is that of NADH-ubiquinone oxidoreductase chain 5 (ND5) from Cryphonectria parasitica (Chestnut blight fungus).